The chain runs to 402 residues: CCA-adding enzyme (402 aa).

Positions 32 and 35 each coordinate ATP. CTP-binding residues include Gly32 and Arg35. Positions 45 and 47 each coordinate Mg(2+). 5 residues coordinate ATP: Arg119, Asp162, Arg165, Arg168, and Arg171. Positions 119, 162, 165, 168, and 171 each coordinate CTP.

It belongs to the tRNA nucleotidyltransferase/poly(A) polymerase family. Bacterial CCA-adding enzyme type 3 subfamily. In terms of assembly, homodimer. It depends on Mg(2+) as a cofactor.

It carries out the reaction a tRNA precursor + 2 CTP + ATP = a tRNA with a 3' CCA end + 3 diphosphate. It catalyses the reaction a tRNA with a 3' CCA end + 2 CTP + ATP = a tRNA with a 3' CCACCA end + 3 diphosphate. In terms of biological role, catalyzes the addition and repair of the essential 3'-terminal CCA sequence in tRNAs without using a nucleic acid template. Adds these three nucleotides in the order of C, C, and A to the tRNA nucleotide-73, using CTP and ATP as substrates and producing inorganic pyrophosphate. tRNA 3'-terminal CCA addition is required both for tRNA processing and repair. Also involved in tRNA surveillance by mediating tandem CCA addition to generate a CCACCA at the 3' terminus of unstable tRNAs. While stable tRNAs receive only 3'-terminal CCA, unstable tRNAs are marked with CCACCA and rapidly degraded. The protein is CCA-adding enzyme of Lactococcus lactis subsp. cremoris (strain MG1363).